A 214-amino-acid polypeptide reads, in one-letter code: C-type lectin domain family 4 member E (214 aa).

At 1-22 (MNSTKSPASHHTERGCFKNSQV) the chain is on the cytoplasmic side. The helical; Signal-anchor for type II membrane protein transmembrane segment at 23–45 (LSWTIAGASILFLSGCFITRCVV) threads the bilayer. Residues 46-214 (TYRSSQISGQ…CEMPEISPLD (169 aa)) lie on the Extracellular side of the membrane. Cysteine 80 and cysteine 91 are oxidised to a cystine. Residues 87 to 206 (YQSSCYFFST…CFYSMPWICE (120 aa)) enclose the C-type lectin domain. Residue asparagine 107 is glycosylated (N-linked (GlcNAc...) asparagine). 2 cysteine pairs are disulfide-bonded: cysteine 108-cysteine 205 and cysteine 179-cysteine 197. 7 residues coordinate Ca(2+): valine 117, glutamate 123, glutamate 169, asparagine 171, asparagine 193, aspartate 194, and glutamate 206. Positions 169 to 171 (EPN) match the Confers specificity for glucose/mannose-type carbohydrates motif.

In terms of assembly, monomer and homodimer. Interacts with signaling adapter Fc receptor gamma chain/FCER1G to form a functional complex; the interaction is direct. Alternatively, acts as a bridge for interaction between CLEC4D and FCER1G. A heterodimer of CLEC4E and CLEC4D associates with FCER1G to form a functional complex. Interacts with SAP130 nuclear protein that is released from necrotic cells; the interaction is direct. In terms of tissue distribution, highly expressed in macrophages in response to stimulation with bacterial glycolipids and pro-inflammatory cytokines. Expressed in dendritic cells (at protein level) in response to stimulation with mycobacterial trehalose 6,6'-dimycolate (TDM).

The protein localises to the cell membrane. Its subcellular location is the cell projection. It is found in the phagocytic cup. Functionally, calcium-dependent lectin that acts as a pattern recognition receptor (PRR) of the innate immune system: recognizes damage-associated molecular patterns (DAMPs) of abnormal self and pathogen-associated molecular patterns (PAMPs) of bacteria and fungi. The PAMPs notably include mycobacterial trehalose 6,6'-dimycolate (TDM), a cell wall glycolipid with potent adjuvant immunomodulatory functions. Interacts with signaling adapter Fc receptor gamma chain/FCER1G to form a functional complex in myeloid cells. Binding of mycobacterial trehalose 6,6'-dimycolate (TDM) to this receptor complex leads to phosphorylation of the immunoreceptor tyrosine-based activation motif (ITAM) of FCER1G, triggering activation of SYK, CARD9 and NF-kappa-B, consequently driving maturation of antigen-presenting cells and shaping antigen-specific priming of T-cells toward effector T-helper 1 (Th1) and T-helper 17 (Th17) cell subtypes. Also recognizes alpha-mannose residues on pathogenic fungi of the genus Malassezia and mediates macrophage activation. Through recognition of DAMPs released upon nonhomeostatic cell death, enables immune sensing of damaged self and promotes inflammatory cell infiltration into the damaged tissue. This chain is C-type lectin domain family 4 member E, found in Mus musculus (Mouse).